We begin with the raw amino-acid sequence, 242 residues long: Dickkopf-like protein 1 (242 aa).

The first 30 residues, 1–30 (MGEASPPAPARRHLLVLLLLLSTLVIPSAA), serve as a signal peptide directing secretion. Residues Asn97 and Asn112 are each glycosylated (N-linked (GlcNAc...) asparagine).

In terms of assembly, interacts with SLXL1; Co-localize in seminiferous tubules. Interacts with SLY. Post-translationally, N-glycosylated during spermatogenesis. Not N-glycosylated in mature sperm. In terms of tissue distribution, more highly expressed in adult testis than in fetal testis. Exclusively expressed in the testis (at protein level). Intense expression in stages II, III and IV of spermatogenesis, whereas expression is lower in stage I.

The protein localises to the secreted. It localises to the cytoplasmic vesicle. It is found in the secretory vesicle. Its subcellular location is the acrosome. Involved in fertilization by facilitating sperm penetration of the zona pellucida. May promote spermatocyte apoptosis, thereby limiting sperm production. In adults, may reduce testosterone synthesis in Leydig cells. Is not essential either for development or fertility. The protein is Dickkopf-like protein 1 of Homo sapiens (Human).